The following is a 200-amino-acid chain: NAD(P)H dehydrogenase (quinone) (200 aa).

The Flavodoxin-like domain maps to 4 to 191; that stretch reads VLVLYYSSYG…DIARYQGKHV (188 aa). Residues 10–15 and 79–81 each bind FMN; these read SSYGHV and TRF. Tyr12 lines the NAD(+) pocket. Substrate is bound at residue Trp99. Residues 114–120 and His135 contribute to the FMN site; that span reads STGTQHG.

The protein belongs to the WrbA family. Requires FMN as cofactor.

The catalysed reaction is a quinone + NADH + H(+) = a quinol + NAD(+). It carries out the reaction a quinone + NADPH + H(+) = a quinol + NADP(+). The polypeptide is NAD(P)H dehydrogenase (quinone) (Burkholderia multivorans (strain ATCC 17616 / 249)).